The sequence spans 210 residues: NADH dehydrogenase [ubiquinone] iron-sulfur protein 8, mitochondrial (210 aa).

Residues 1–34 (MRCLTMPTLLRALAQAAHTGPPGGRTLHSSAVAA) constitute a mitochondrion transit peptide. 4Fe-4S ferredoxin-type domains follow at residues 102-131 (RRYPSGEERCIACKLCEAVCPAQAITIEAE) and 141-170 (TRYDIDMTKCIYCGFCQEACPVDAIVEGPN). [4Fe-4S] cluster is bound by residues C111, C114, C117, C121, C150, C153, C156, and C160.

The protein belongs to the complex I 23 kDa subunit family. As to quaternary structure, core subunit of respiratory chain NADH dehydrogenase (Complex I) which is composed of 45 different subunits. This is a component of the iron-sulfur (IP) fragment of the enzyme. Interacts with RAB5IF. [4Fe-4S] cluster is required as a cofactor.

It is found in the mitochondrion inner membrane. The catalysed reaction is a ubiquinone + NADH + 5 H(+)(in) = a ubiquinol + NAD(+) + 4 H(+)(out). Functionally, core subunit of the mitochondrial membrane respiratory chain NADH dehydrogenase (Complex I) which catalyzes electron transfer from NADH through the respiratory chain, using ubiquinone as an electron acceptor. Essential for the catalytic activity and assembly of complex I. The chain is NADH dehydrogenase [ubiquinone] iron-sulfur protein 8, mitochondrial (NDUFS8) from Macaca fascicularis (Crab-eating macaque).